A 734-amino-acid polypeptide reads, in one-letter code: MGGPHGGPFLLFHVLCFLLTLSEVGSQNSKACALPCPPNSSCVNGTACRCAPGFISFSGEIFTDPLESCDDINECGPPSPVDCGSSADCQNTEGGYYCTCSPGYEPVSGAMIFRNESENTCRDVDECSSGQHQCHNSTVCFNTVGSYTCHCREGWEPKHGLKNKQKDTICKEISFPAWTAPPGIKSRSLSAFFERVQKMSRDFKPAMAKKSMQDLVGSVDDLLKNSGDLESLDQSSKHVTVTHLLSGLEQILRTLAKAMPKGSFTYRSLDNTELSLVVQEQGKGNVTVGQSHARMLLDWAVAAAAEESGPTVVGILSSQNMKKLLANASLKLDSEKLKETYKSPVRGAKVTLLSAVSSVFLSNTNTEKLDSNVSFAFALHEQPELKPRQELICAFWKKDSNGNGSWATTGCWKMGRGNGSITCQCSHLSSFAILMAHYDVEDPKLALITKVGLALSLACLLLCILTFLLVRPIQGSRTTVHLHLCICLFVGSAIFLAGIENEGGEVGTRCRLVAVLLHYCFLAAFCWMSLEGVELYFLVVRVFQGQGMRKLWLCLIGYGVPLIIVGISAGAYSKGYGREKFCWLNFEGGFLWSFVGPVTFIVLGNAIIFVITVWKLTQKFSEINPDIKKLKKARVLTITAIAQLFVLGCTWVFGLLLFNPESWVLSYIFSILNCLQGFFLFVLYCLLNKKVREEYRKWACMVAGNKYSEFATTTSGSGSSHNQTQALRPSESGM.

The first 26 residues, 1–26 (MGGPHGGPFLLFHVLCFLLTLSEVGS), serve as a signal peptide directing secretion. The Extracellular segment spans residues 27–449 (QNSKACALPC…VEDPKLALIT (423 aa)). The EGF-like 1 domain occupies 28–70 (NSKACALPCPPNSSCVNGTACRCAPGFISFSGEIFTDPLESCD). 9 disulfides stabilise this stretch: C32–C42, C36–C48, C50–C69, C75–C89, C83–C98, C100–C121, C127–C140, C134–C149, and C151–C170. N-linked (GlcNAc...) asparagine glycosylation is found at N39 and N44. The region spanning 71–122 (DINECGPPSPVDCGSSADCQNTEGGYYCTCSPGYEPVSGAMIFRNESENTCR) is the EGF-like 2; calcium-binding domain. N-linked (GlcNAc...) asparagine glycosylation is found at N115 and N136. Positions 123–171 (DVDECSSGQHQCHNSTVCFNTVGSYTCHCREGWEPKHGLKNKQKDTICK) constitute an EGF-like 3; calcium-binding domain. One can recognise a GAIN-B domain in the interval 265–441 (TYRSLDNTEL…AILMAHYDVE (177 aa)). N-linked (GlcNAc...) asparagine glycosylation is found at N285, N327, N372, N403, and N418. 2 disulfide bridges follow: C393-C423 and C411-C425. The GPS stretch occupies residues 393-441 (CAFWKKDSNGNGSWATTGCWKMGRGNGSITCQCSHLSSFAILMAHYDVE). Residues 450–470 (KVGLALSLACLLLCILTFLLV) traverse the membrane as a helical segment. Topologically, residues 471–478 (RPIQGSRT) are cytoplasmic. Residues 479-499 (TVHLHLCICLFVGSAIFLAGI) form a helical membrane-spanning segment. The Extracellular segment spans residues 500–519 (ENEGGEVGTRCRLVAVLLHY). A helical membrane pass occupies residues 520–540 (CFLAAFCWMSLEGVELYFLVV). The Cytoplasmic portion of the chain corresponds to 541-550 (RVFQGQGMRK). A helical membrane pass occupies residues 551–571 (LWLCLIGYGVPLIIVGISAGA). Residues 572–593 (YSKGYGREKFCWLNFEGGFLWS) are Extracellular-facing. The helical transmembrane segment at 594–614 (FVGPVTFIVLGNAIIFVITVW) threads the bilayer. At 615-637 (KLTQKFSEINPDIKKLKKARVLT) the chain is on the cytoplasmic side. A helical transmembrane segment spans residues 638-658 (ITAIAQLFVLGCTWVFGLLLF). At 659–662 (NPES) the chain is on the extracellular side. The chain crosses the membrane as a helical span at residues 663 to 683 (WVLSYIFSILNCLQGFFLFVL). The Cytoplasmic portion of the chain corresponds to 684–734 (YCLLNKKVREEYRKWACMVAGNKYSEFATTTSGSGSSHNQTQALRPSESGM). The interval 712–734 (TTTSGSGSSHNQTQALRPSESGM) is disordered. T713 is modified (phosphothreonine). The residue at position 715 (S715) is a Phosphoserine. A Phosphothreonine modification is found at T724. 2 positions are modified to phosphoserine: S730 and S732.

Belongs to the G-protein coupled receptor 2 family. LN-TM7 subfamily. In terms of assembly, forms a heterodimer, consisting of a large extracellular region (alpha subunit) non-covalently linked to a seven-transmembrane moiety (beta subunit). Interacts with complement decay-accelerating factor (DAF) and with chondroitin sulfate. Post-translationally, proteolytically cleaved into 2 subunits, an extracellular alpha subunit and a seven-transmembrane subunit.

It localises to the cell membrane. The protein resides in the secreted. Its subcellular location is the extracellular space. In terms of biological role, receptor potentially involved in both adhesion and signaling processes early after leukocyte activation. Plays an essential role in leukocyte migration. This chain is Adhesion G protein-coupled receptor E5, found in Bos taurus (Bovine).